The sequence spans 894 residues: Translation initiation factor IF-2 (894 aa).

The segment at 52 to 301 is disordered; the sequence is DRGAAPNKLT…RRPSTLTQGF (250 aa). Residues 68–82 show a composition bias toward polar residues; that stretch reads STLNIPSTGGKSKSV. Over residues 107–154 the composition is skewed to basic and acidic residues; it reads EQARREAEELAQHQVQRDAEEKAKRAAEDKAKREAAEQAKRVAAESDK. Over residues 155–168 the composition is skewed to polar residues; it reads LTNQQTNTMTKSPQ. Composition is skewed to basic and acidic residues over residues 171 to 214 and 237 to 254; these read EKAR…ERGG and HAREAEDENDRKVEGDRR. Over residues 255-269 the composition is skewed to basic residues; it reads SRTRGGKATKQKKTS. Residues 270 to 283 show a composition bias toward basic and acidic residues; sequence RLSESKADREEARA. One can recognise a tr-type G domain in the interval 393–562; sequence SRAPVVTIMG…LLQAEVLELK (170 aa). Residues 402-409 are G1; sequence GHVDHGKT. Residue 402 to 409 participates in GTP binding; it reads GHVDHGKT. The G2 stretch occupies residues 427–431; the sequence is GITQH. Residues 448–451 are G3; the sequence is DTPG. GTP-binding positions include 448-452 and 502-505; these read DTPGH and NKID. Residues 502-505 are G4; the sequence is NKID. Residues 538-540 form a G5 region; it reads SAK.

Belongs to the TRAFAC class translation factor GTPase superfamily. Classic translation factor GTPase family. IF-2 subfamily.

The protein localises to the cytoplasm. Its function is as follows. One of the essential components for the initiation of protein synthesis. Protects formylmethionyl-tRNA from spontaneous hydrolysis and promotes its binding to the 30S ribosomal subunits. Also involved in the hydrolysis of GTP during the formation of the 70S ribosomal complex. The chain is Translation initiation factor IF-2 from Sodalis glossinidius (strain morsitans).